The primary structure comprises 399 residues: Nuclear hormone receptor family member nhr-125 (399 aa).

Positions 10–80 (PFSCRICNQK…MGMDTTKFQY (71 aa)) form a DNA-binding region, nuclear receptor. 2 NR C4-type zinc fingers span residues 13–33 (CRIC…CRAC) and 50–63 (CQKG…CKRC). Positions 149-392 (QLENLTEGFK…EKLQKSQFSI (244 aa)) constitute an NR LBD domain.

Belongs to the nuclear hormone receptor family.

It localises to the nucleus. Functionally, orphan nuclear receptor. In Caenorhabditis elegans, this protein is Nuclear hormone receptor family member nhr-125 (nhr-125).